The chain runs to 453 residues: Ribosomal protein uS12 methylthiotransferase RimO (453 aa).

The MTTase N-terminal domain maps to 5–120 (PKVGFVSLGC…VMQAVHSHLP (116 aa)). Cys14, Cys50, Cys79, Cys151, Cys155, and Cys158 together coordinate [4Fe-4S] cluster. Residues 137-382 (LTPRHYAYLK…MEVAEEVSAR (246 aa)) form the Radical SAM core domain. Residues 385-453 (ARKVGKTLKV…ADGHDLWGEV (69 aa)) form the TRAM domain.

It belongs to the methylthiotransferase family. RimO subfamily. [4Fe-4S] cluster is required as a cofactor.

It is found in the cytoplasm. The catalysed reaction is L-aspartate(89)-[ribosomal protein uS12]-hydrogen + (sulfur carrier)-SH + AH2 + 2 S-adenosyl-L-methionine = 3-methylsulfanyl-L-aspartate(89)-[ribosomal protein uS12]-hydrogen + (sulfur carrier)-H + 5'-deoxyadenosine + L-methionine + A + S-adenosyl-L-homocysteine + 2 H(+). In terms of biological role, catalyzes the methylthiolation of an aspartic acid residue of ribosomal protein uS12. The protein is Ribosomal protein uS12 methylthiotransferase RimO of Burkholderia multivorans (strain ATCC 17616 / 249).